The following is a 279-amino-acid chain: Shikimate dehydrogenase (NADP(+)) (279 aa).

Residues 17–19 and Thr-64 each bind shikimate; that span reads SQS. Lys-68 (proton acceptor) is an active-site residue. Shikimate-binding residues include Asn-89 and Asp-105. NADP(+) is bound by residues 130–134 and Leu-218; that span reads GAGGA. Tyr-220 is a binding site for shikimate. Gly-242 is an NADP(+) binding site.

This sequence belongs to the shikimate dehydrogenase family. In terms of assembly, homodimer.

The enzyme catalyses shikimate + NADP(+) = 3-dehydroshikimate + NADPH + H(+). The protein operates within metabolic intermediate biosynthesis; chorismate biosynthesis; chorismate from D-erythrose 4-phosphate and phosphoenolpyruvate: step 4/7. In terms of biological role, involved in the biosynthesis of the chorismate, which leads to the biosynthesis of aromatic amino acids. Catalyzes the reversible NADPH linked reduction of 3-dehydroshikimate (DHSA) to yield shikimate (SA). This chain is Shikimate dehydrogenase (NADP(+)), found in Methylococcus capsulatus (strain ATCC 33009 / NCIMB 11132 / Bath).